The primary structure comprises 305 residues: Major pollen allergen Pha a 5.2 (305 aa).

The first 25 residues, 1–25, serve as a signal peptide directing secretion; the sequence is MAVQKYTVALFLAVALVAGPAALYA. Residues 65–85 are compositionally biased toward basic and acidic residues; the sequence is GLNEEKNAARQTDDEQKRSDE. Disordered stretches follow at residues 65-87 and 279-299; these read GLNEEKNAARQTDDEQKRSDEIN and STATPAAPPPPQLGTATPAAV.

This sequence belongs to the Poa p IX/Phl p VI allergen family.

The protein is Major pollen allergen Pha a 5.2 of Phalaris aquatica (Canary grass).